Here is a 643-residue protein sequence, read N- to C-terminus: Sodium-dependent nutrient amino acid transporter 1 (643 aa).

Positions Met-1–Arg-38 are disordered. Residues Met-1–Asn-40 are Cytoplasmic-facing. Low complexity predominate over residues Pro-8–Thr-26. A compositionally biased stretch (basic and acidic residues) spans Glu-27–Ala-36. 3 consecutive transmembrane segments (helical) span residues Trp-41–Val-61, Gly-74–Leu-94, and Ser-111–Ile-131. N-linked (GlcNAc...) asparagine glycans are attached at residues Asn-185, Asn-190, and Asn-200. The next 9 membrane-spanning stretches (helical) occupy residues Pro-231–Met-251, Ala-260–Val-280, Ala-309–Ser-329, Ile-343–Leu-363, Leu-403–Leu-423, Val-449–Leu-469, Thr-476–Leu-496, Cys-518–Ile-538, and Val-554–Tyr-574.

This sequence belongs to the sodium:neurotransmitter symporter (SNF) (TC 2.A.22) family.

The protein localises to the membrane. Unusual broad substrate spectrum amino acid:sodium cotransporter that promotes absorption of the D isomers of essential amino acids. Neutral amino acids are the preferred substrates, especially methionine and phenylalanine. The protein is Sodium-dependent nutrient amino acid transporter 1 of Drosophila simulans (Fruit fly).